A 90-amino-acid chain; its full sequence is Probable Fe(2+)-trafficking protein (90 aa).

The protein belongs to the Fe(2+)-trafficking protein family. As to quaternary structure, monomer.

Functionally, could be a mediator in iron transactions between iron acquisition and iron-requiring processes, such as synthesis and/or repair of Fe-S clusters in biosynthetic enzymes. This is Probable Fe(2+)-trafficking protein from Pectobacterium atrosepticum (strain SCRI 1043 / ATCC BAA-672) (Erwinia carotovora subsp. atroseptica).